Reading from the N-terminus, the 318-residue chain is Thiohydrolase aneE (318 aa).

It belongs to the polyketide transferase af380 family.

It carries out the reaction aculene D + L-prolyl-[peptidyl-carrier protein] = aculene B + holo-[peptidyl-carrier protein]. It catalyses the reaction aculene C + L-prolyl-[peptidyl-carrier protein] = aculene A + holo-[peptidyl-carrier protein]. The protein operates within secondary metabolite biosynthesis. Its function is as follows. Thiohydrolase; part of the gene cluster that mediates the biosynthesis of aculenes, a unique type of norsesquiterpenes that contain a nordaucane skeleton linked to an L-proline moiety and are of mixed biosynthetic origin. The pathway begins with the synthesis of dauca-4,7-diene by the terpene cyclase aneC using farnesyl pyrophosphate (FPP) as substrate. The cytochrome P450 monooxygenase aneF then performs the initial oxidation at C-12 of dauca-4,7-diene to yield asperaculane D. Asperaculane D is substrate of the cytochrome P450 monooxygenase aneD for C-10 hydroxylation to yield asperaculane E. The cytochrome P450 monooxygenase aneG then converts asperaculane E into aculene D via C-2 oxidation. The monomodular nonribosomal peptide synthtase aneB adenylates L-proline and the thiohydrolase aneE transfers this activated L-proline derivative to aculenes D and C to produce respectively aculenes B and A. The dioxygenase aneA converts aculene D into aculene C, and aculene B into aculene A by introducing the 5,6-alkene moiety. Asperculanes A, B, C and F, as well as 14-prolyl asperculane C, might be shunt products of the pathway. This is Thiohydrolase aneE from Aspergillus aculeatus (strain ATCC 16872 / CBS 172.66 / WB 5094).